Here is a 405-residue protein sequence, read N- to C-terminus: Tryptophan synthase beta chain (405 aa).

Lys-98 carries the N6-(pyridoxal phosphate)lysine modification.

The protein belongs to the TrpB family. In terms of assembly, tetramer of two alpha and two beta chains. Pyridoxal 5'-phosphate is required as a cofactor.

The enzyme catalyses (1S,2R)-1-C-(indol-3-yl)glycerol 3-phosphate + L-serine = D-glyceraldehyde 3-phosphate + L-tryptophan + H2O. It functions in the pathway amino-acid biosynthesis; L-tryptophan biosynthesis; L-tryptophan from chorismate: step 5/5. In terms of biological role, the beta subunit is responsible for the synthesis of L-tryptophan from indole and L-serine. This Stenotrophomonas maltophilia (strain K279a) protein is Tryptophan synthase beta chain.